The following is a 430-amino-acid chain: Cortical fragment-lytic enzyme (430 aa).

LysM domains are found at residues 3 to 47 (QIVT…ALIV) and 52 to 96 (NNYY…QLYI). The GH18 domain maps to 104–430 (VESIAYLQPS…VENFTITKKG (327 aa)). Glutamate 219 serves as the catalytic Proton donor.

This sequence belongs to the glycosyl hydrolase 18 family. Chitinase class II subfamily.

The protein localises to the forespore. In terms of biological role, N-acetylglucosaminidase involved in cortex peptidoglycan degradation during germination. Cleaves only partially degraded spore peptidoglycans. Recognizes muramic acid delta-lactam residues specific to spore peptidoglycans. This chain is Cortical fragment-lytic enzyme, found in Bacillus anthracis.